A 205-amino-acid polypeptide reads, in one-letter code: Transcriptional regulatory protein PdtaR (205 aa).

Residues 15 to 129 (RVLIAEDEAL…DLIPAIELAV (115 aa)) form the Response regulatory domain. Asp65 is modified (4-aspartylphosphate). The ANTAR domain occupies 135–196 (ITALEGEVAT…TMKRVAEVVL (62 aa)).

In terms of processing, phosphorylated and activated by PdtaS.

It localises to the cytoplasm. Its function is as follows. Member of the two-component regulatory system PdtaR/PdtaS. This two-component system plays an essential role in mycobacterial adaptation to poor nutrient conditions. PdtaR probably acts at the level of transcriptional antitermination rather than transcriptional initiation. Functionally, in addition, the PdtaR/PdtaS two-component system controls copper and nitric oxide (NO) resistance downstream of the intramembrane protease Rip1. This coupled Rip1/PdtaS/PdtaR circuit controls NO resistance and acute lung infection in mice by relieving PdtaR/PdtaS-mediated repression of isonitrile chalkophore biosynthesis. Two signals are required to fully inactivate the PdtaR/PdtaS system and mediate NO resistance: a cytoplasmic inhibitory signal through the PdtaS kinase mediated by direct sensing of NO and the production of PPE1-5', an NO-induced small RNA, to sequester PdtaR. This chain is Transcriptional regulatory protein PdtaR (pdtaR), found in Mycobacterium tuberculosis (strain CDC 1551 / Oshkosh).